A 394-amino-acid chain; its full sequence is Elongation factor Tu 2 (394 aa).

Residues 9–204 form the tr-type G domain; it reads KPHCNIGTIG…SIDDYIPQPT (196 aa). Positions 18-25 are G1; that stretch reads GHVDHGKT. Position 18–25 (18–25) interacts with GTP; that stretch reads GHVDHGKT. Thr25 serves as a coordination point for Mg(2+). A G2 region spans residues 61-65; the sequence is GITIQ. A G3 region spans residues 82–85; sequence DCPG. Residues 82-86 and 137-140 contribute to the GTP site; these read DCPGH and NKID. Positions 137 to 140 are G4; sequence NKID. The segment at 174–176 is G5; the sequence is SAL.

It belongs to the TRAFAC class translation factor GTPase superfamily. Classic translation factor GTPase family. EF-Tu/EF-1A subfamily. As to quaternary structure, monomer.

The protein resides in the cytoplasm. The enzyme catalyses GTP + H2O = GDP + phosphate + H(+). In terms of biological role, GTP hydrolase that promotes the GTP-dependent binding of aminoacyl-tRNA to the A-site of ribosomes during protein biosynthesis. The protein is Elongation factor Tu 2 of Orientia tsutsugamushi (strain Boryong) (Rickettsia tsutsugamushi).